The chain runs to 378 residues: tRNA-specific 2-thiouridylase MnmA (378 aa).

ATP is bound by residues 9 to 16 (GVSGGVDS) and Met-35. Residues 94–96 (NPD) form an interaction with target base in tRNA region. Residue Cys-99 is the Nucleophile of the active site. A disulfide bond links Cys-99 and Cys-195. ATP is bound at residue Gly-123. Residues 145 to 147 (KDQ) are interaction with tRNA. The active-site Cysteine persulfide intermediate is Cys-195. The interaction with tRNA stretch occupies residues 307–308 (RY).

It belongs to the MnmA/TRMU family.

It is found in the cytoplasm. The enzyme catalyses S-sulfanyl-L-cysteinyl-[protein] + uridine(34) in tRNA + AH2 + ATP = 2-thiouridine(34) in tRNA + L-cysteinyl-[protein] + A + AMP + diphosphate + H(+). Catalyzes the 2-thiolation of uridine at the wobble position (U34) of tRNA, leading to the formation of s(2)U34. The chain is tRNA-specific 2-thiouridylase MnmA from Xanthomonas oryzae pv. oryzae (strain PXO99A).